We begin with the raw amino-acid sequence, 176 residues long: Gamma-crystallin M2 (176 aa).

Beta/gamma crystallin 'Greek key' domains lie at 2–40 (GKVIFYEDRNFQGRHYECSSDCADLSPYFSRCNSIRVEG) and 41–83 (GCWV…RIIP). The tract at residues 84–88 (QYRGS) is connecting peptide. Beta/gamma crystallin 'Greek key' domains are found at residues 89 to 129 (YRMR…HVMD) and 130 to 172 (GYWI…RRIM).

Belongs to the beta/gamma-crystallin family. In terms of assembly, monomer.

Its function is as follows. Crystallins are the dominant structural components of the vertebrate eye lens. This chain is Gamma-crystallin M2 (GM2), found in Chiloscyllium indicum (Slender bamboo shark).